Reading from the N-terminus, the 427-residue chain is Glutamate-1-semialdehyde 2,1-aminomutase (427 aa).

Lysine 265 is modified (N6-(pyridoxal phosphate)lysine).

The protein belongs to the class-III pyridoxal-phosphate-dependent aminotransferase family. HemL subfamily. Homodimer. It depends on pyridoxal 5'-phosphate as a cofactor.

The protein resides in the cytoplasm. It carries out the reaction (S)-4-amino-5-oxopentanoate = 5-aminolevulinate. Its pathway is porphyrin-containing compound metabolism; protoporphyrin-IX biosynthesis; 5-aminolevulinate from L-glutamyl-tRNA(Glu): step 2/2. In Burkholderia orbicola (strain MC0-3), this protein is Glutamate-1-semialdehyde 2,1-aminomutase.